The chain runs to 282 residues: tRNA pseudouridine synthase B (282 aa).

Residue Asp36 is the Nucleophile of the active site.

Belongs to the pseudouridine synthase TruB family. Type 1 subfamily.

It catalyses the reaction uridine(55) in tRNA = pseudouridine(55) in tRNA. Functionally, responsible for synthesis of pseudouridine from uracil-55 in the psi GC loop of transfer RNAs. The polypeptide is tRNA pseudouridine synthase B (Mycoplasmopsis pulmonis (strain UAB CTIP) (Mycoplasma pulmonis)).